The following is a 421-amino-acid chain: Serine--tRNA ligase (421 aa).

232–234 (TAE) is an L-serine binding site. Position 262–264 (262–264 (RSE)) interacts with ATP. Residue E285 participates in L-serine binding. 349–352 (EVSS) is a binding site for ATP. S384 lines the L-serine pocket.

The protein belongs to the class-II aminoacyl-tRNA synthetase family. Type-1 seryl-tRNA synthetase subfamily. Homodimer. The tRNA molecule binds across the dimer.

Its subcellular location is the cytoplasm. The catalysed reaction is tRNA(Ser) + L-serine + ATP = L-seryl-tRNA(Ser) + AMP + diphosphate + H(+). It carries out the reaction tRNA(Sec) + L-serine + ATP = L-seryl-tRNA(Sec) + AMP + diphosphate + H(+). It participates in aminoacyl-tRNA biosynthesis; selenocysteinyl-tRNA(Sec) biosynthesis; L-seryl-tRNA(Sec) from L-serine and tRNA(Sec): step 1/1. In terms of biological role, catalyzes the attachment of serine to tRNA(Ser). Is also able to aminoacylate tRNA(Sec) with serine, to form the misacylated tRNA L-seryl-tRNA(Sec), which will be further converted into selenocysteinyl-tRNA(Sec). This Mycoplasma mobile (strain ATCC 43663 / 163K / NCTC 11711) (Mesomycoplasma mobile) protein is Serine--tRNA ligase.